Here is a 358-residue protein sequence, read N- to C-terminus: MKILVVDDSALMRTTISDILQNIPNAEIKTARDGMDAIDKVMKWQPDVMTLDINMPNMDGLTCLTQIMVERPLPIVMLSSLTHEGAITTLEALYLGAVDFVAKPGGTICGRLQEVAPLIREKVRAAAKMRVKVHTQLSVSPAEVEHKHKSPVVENNEDHQLAIMGVSTGGPGTVETILRHLPADFSLPIIVNQHMPESFTAAFAQRLNRHLQQPVKEINRALVLEAGTVYVCKGDRDCIVTLRDGKLAAMPTPNDSHFSWHPSVSKLVASAIRTCGEDNLLCVMLTGMGDDGATEMAQVAQGNGIVFAQEPTTCVVPSMPEALLKRVPHIPTGTPEHLAYLMTEVVRQSSRELHYGNH.

One can recognise a Response regulatory domain in the interval 2–118 (KILVVDDSAL…CGRLQEVAPL (117 aa)). Residue Asp52 is modified to 4-aspartylphosphate. Positions 155–325 (NNEDHQLAIM…VPSMPEALLK (171 aa)) constitute a CheB-type methylesterase domain. Active-site residues include Ser167, His194, and Asp291.

Belongs to the CheB family. Post-translationally, phosphorylated by CheA. Phosphorylation of the N-terminal regulatory domain activates the methylesterase activity.

It localises to the cytoplasm. The enzyme catalyses [protein]-L-glutamate 5-O-methyl ester + H2O = L-glutamyl-[protein] + methanol + H(+). It carries out the reaction L-glutaminyl-[protein] + H2O = L-glutamyl-[protein] + NH4(+). Functionally, involved in chemotaxis. Part of a chemotaxis signal transduction system that modulates chemotaxis in response to various stimuli. Catalyzes the demethylation of specific methylglutamate residues introduced into the chemoreceptors (methyl-accepting chemotaxis proteins or MCP) by CheR. Also mediates the irreversible deamidation of specific glutamine residues to glutamic acid. The polypeptide is Protein-glutamate methylesterase/protein-glutamine glutaminase 3 (Vibrio cholerae serotype O1 (strain ATCC 39315 / El Tor Inaba N16961)).